A 364-amino-acid polypeptide reads, in one-letter code: Probable dual-specificity RNA methyltransferase RlmN (364 aa).

Catalysis depends on E106, which acts as the Proton acceptor. The Radical SAM core domain occupies 112 to 350; sequence YPRRNTVCIS…SCTVRDTRGR (239 aa). Cysteines 119 and 356 form a disulfide. [4Fe-4S] cluster-binding residues include C126, C130, and C133. Residues 177 to 178, S211, 234 to 236, and N313 each bind S-adenosyl-L-methionine; these read GE and SLH. The active-site S-methylcysteine intermediate is the C356.

Belongs to the radical SAM superfamily. RlmN family. [4Fe-4S] cluster is required as a cofactor.

The protein localises to the cytoplasm. It catalyses the reaction adenosine(2503) in 23S rRNA + 2 reduced [2Fe-2S]-[ferredoxin] + 2 S-adenosyl-L-methionine = 2-methyladenosine(2503) in 23S rRNA + 5'-deoxyadenosine + L-methionine + 2 oxidized [2Fe-2S]-[ferredoxin] + S-adenosyl-L-homocysteine. The catalysed reaction is adenosine(37) in tRNA + 2 reduced [2Fe-2S]-[ferredoxin] + 2 S-adenosyl-L-methionine = 2-methyladenosine(37) in tRNA + 5'-deoxyadenosine + L-methionine + 2 oxidized [2Fe-2S]-[ferredoxin] + S-adenosyl-L-homocysteine. Its function is as follows. Specifically methylates position 2 of adenine 2503 in 23S rRNA and position 2 of adenine 37 in tRNAs. In Mycobacterium bovis (strain ATCC BAA-935 / AF2122/97), this protein is Probable dual-specificity RNA methyltransferase RlmN.